The chain runs to 206 residues: MELNVKTLEGKDAGKVSLSDEIFGLEPREDILARVIRWQLAKKQQGTHKAKGRAEVSRTGAKMYKQKGTGRARHHSARAPQFRGGGKAHGPVVRSHEHDLPKKVRALGLRHALSAKIKADDVIVIDNLVAAEAKTKALASAFETLGLTNALFIGGAELDGNFKLAAQNIPNIDVLPIQGINVYDIVRRGKLVLSKAAVEALEERFK.

The segment at 63–97 (MYKQKGTGRARHHSARAPQFRGGGKAHGPVVRSHE) is disordered. Residues 64–77 (YKQKGTGRARHHSA) show a composition bias toward basic residues.

Belongs to the universal ribosomal protein uL4 family. As to quaternary structure, part of the 50S ribosomal subunit.

Functionally, one of the primary rRNA binding proteins, this protein initially binds near the 5'-end of the 23S rRNA. It is important during the early stages of 50S assembly. It makes multiple contacts with different domains of the 23S rRNA in the assembled 50S subunit and ribosome. Its function is as follows. Forms part of the polypeptide exit tunnel. This is Large ribosomal subunit protein uL4 from Rhizobium etli (strain ATCC 51251 / DSM 11541 / JCM 21823 / NBRC 15573 / CFN 42).